A 311-amino-acid chain; its full sequence is 4-hydroxy-tetrahydrodipicolinate synthase (311 aa).

T51 contacts pyruvate. Y140 serves as the catalytic Proton donor/acceptor. K168 (schiff-base intermediate with substrate) is an active-site residue. Residue I209 participates in pyruvate binding.

Belongs to the DapA family. Homotetramer; dimer of dimers.

It is found in the cytoplasm. The enzyme catalyses L-aspartate 4-semialdehyde + pyruvate = (2S,4S)-4-hydroxy-2,3,4,5-tetrahydrodipicolinate + H2O + H(+). It participates in amino-acid biosynthesis; L-lysine biosynthesis via DAP pathway; (S)-tetrahydrodipicolinate from L-aspartate: step 3/4. Functionally, catalyzes the condensation of (S)-aspartate-beta-semialdehyde [(S)-ASA] and pyruvate to 4-hydroxy-tetrahydrodipicolinate (HTPA). This chain is 4-hydroxy-tetrahydrodipicolinate synthase, found in Streptococcus pneumoniae (strain CGSP14).